The primary structure comprises 76 residues: Defensin-like protein 125 (76 aa).

A signal peptide spans 1–25 (MTKAITLAIFMVVLVLGMVTKETQG). Intrachain disulfides connect cysteine 30-cysteine 74, cysteine 41-cysteine 60, cysteine 46-cysteine 68, and cysteine 50-cysteine 70.

Belongs to the DEFL family.

It localises to the secreted. In Arabidopsis thaliana (Mouse-ear cress), this protein is Defensin-like protein 125 (LCR54).